Reading from the N-terminus, the 132-residue chain is MSCGMSQLERSIDTIINVFHQYSVRVGPRDSLSQKEFKQLVQKELHNFLKKEARDEKAINDIMEDLDTNQDKQLSFEEFVILMARLVHASHEEMHKNAPHDHEGHSHGPGLGGGGPGHGHGHSHGHGHGHSH.

At Cys-3 the chain carries S-nitrosocysteine. Residue His-20 coordinates Zn(2+). Residue Ser-23 participates in Ca(2+) binding. 2 EF-hand domains span residues 26-61 (VGPRDSLSQKEFKQLVQKELHNFLKKEARDEKAIND) and 54-89 (RDEKAINDIMEDLDTNQDKQLSFEEFVILMARLVHA). Asp-30 is a Zn(2+) binding site. Glu-36, Asp-67, Asn-69, Asp-71, Gln-73, and Glu-78 together coordinate Ca(2+). The Zn(2+) site is built by His-91 and His-95. The span at 92 to 106 (EEMHKNAPHDHEGHS) shows a compositional bias: basic and acidic residues. A disordered region spans residues 92-132 (EEMHKNAPHDHEGHSHGPGLGGGGPGHGHGHSHGHGHGHSH). Position 107 is a pros-methylhistidine (His-107). Residues 107-118 (HGPGLGGGGPGH) are compositionally biased toward gly residues. 2 tandem repeats follow at residues 117–124 (GHGHGHSH) and 125–132 (GHGHGHSH). Positions 117–132 (GHGHGHSHGHGHGHSH) are 2 X 8 AA tandem repeats of G-H-G-H-G-H-S-H. The segment covering 119-132 (GHGHSHGHGHGHSH) has biased composition (basic residues).

The protein belongs to the S-100 family. As to quaternary structure, homodimer. Preferentially exists as a heterodimer or heterotetramer with S100A8 known as calprotectin (S100A8/A9). S100A9 interacts with ATP2A2. S100A9 interacts with AGER, and with the heterodimeric complex formed by TLR4 and LY96 in the presence of calcium and/or zinc ions. S100A9 binds quinoline-3-carboxamides in the presence of calcium and/or zinc ions. S100A9 interacts with amyloid-beta protein 40. Calprotectin (S100A8/9) interacts with CEACAM3 and tubulin filaments in a calcium-dependent manner. Heterotetrameric calprotectin (S100A8/A9) interacts with ANXA6 and associates with tubulin filaments in activated monocytes. Calprotectin (S100A8/9) interacts with NCF2/P67PHOX, RAC1, RAC2, CYBA and CYBB. Calprotectin (S100A8/9) interacts with NOS2 to form the iNOS-S100A8/A9 transnitrosylase complex; induced by LDL(ox). Calprotectin (S100A8/9) interacts with CD69. Post-translationally, phosphorylated. Phosphorylation inhibits activation of tubulin polymerization. Methylation at His-107 by METTL9 reduces zinc-binding without affecting heterodimerization with S100A8.

The protein resides in the secreted. It localises to the cytoplasm. Its subcellular location is the cytoskeleton. The protein localises to the cell membrane. Functionally, S100A9 is a calcium- and zinc-binding protein which plays a prominent role in the regulation of inflammatory processes and immune response. It can induce neutrophil chemotaxis, adhesion, can increase the bactericidal activity of neutrophils by promoting phagocytosis via activation of SYK, PI3K/AKT, and ERK1/2 and can induce degranulation of neutrophils by a MAPK-dependent mechanism. Predominantly found as calprotectin (S100A8/A9) which has a wide plethora of intra- and extracellular functions. The intracellular functions include: facilitating leukocyte arachidonic acid trafficking and metabolism, modulation of the tubulin-dependent cytoskeleton during migration of phagocytes and activation of the neutrophilic NADPH-oxidase. Also participates in regulatory T-cell differentiation together with CD69. Activates NADPH-oxidase by facilitating the enzyme complex assembly at the cell membrane, transferring arachidonic acid, an essential cofactor, to the enzyme complex and S100A8 contributes to the enzyme assembly by directly binding to NCF2/P67PHOX. The extracellular functions involve pro-inflammatory, antimicrobial, oxidant-scavenging and apoptosis-inducing activities. Its pro-inflammatory activity includes recruitment of leukocytes, promotion of cytokine and chemokine production, and regulation of leukocyte adhesion and migration. Acts as an alarmin or a danger associated molecular pattern (DAMP) molecule and stimulates innate immune cells via binding to pattern recognition receptors such as Toll-like receptor 4 (TLR4) and receptor for advanced glycation endproducts (AGER). Binding to TLR4 and AGER activates the MAP-kinase and NF-kappa-B signaling pathways resulting in the amplification of the pro-inflammatory cascade. Has antimicrobial activity towards bacteria and fungi and exerts its antimicrobial activity probably via chelation of Zn(2+) which is essential for microbial growth. Can induce cell death via autophagy and apoptosis and this occurs through the cross-talk of mitochondria and lysosomes via reactive oxygen species (ROS) and the process involves BNIP3. Can regulate neutrophil number and apoptosis by an anti-apoptotic effect; regulates cell survival via ITGAM/ITGB and TLR4 and a signaling mechanism involving MEK-ERK. Its role as an oxidant scavenger has a protective role in preventing exaggerated tissue damage by scavenging oxidants. The iNOS-S100A8/A9 transnitrosylase complex is proposed to direct selective inflammatory stimulus-dependent S-nitrosylation of multiple targets such as GAPDH, NXA5, EZR, MSN and VIM by recognizing a [IL]-x-C-x-x-[DE] motif. In Oryctolagus cuniculus (Rabbit), this protein is Protein S100-A9 (S100A9).